An 802-amino-acid polypeptide reads, in one-letter code: Leucine--tRNA ligase (802 aa).

Residues 40–51 carry the 'HIGH' region motif; it reads PYPSGAGLHVGH. The 'KMSKS' region signature appears at 576–580; that stretch reads KMSKS. Lys-579 lines the ATP pocket.

This sequence belongs to the class-I aminoacyl-tRNA synthetase family.

The protein localises to the cytoplasm. The catalysed reaction is tRNA(Leu) + L-leucine + ATP = L-leucyl-tRNA(Leu) + AMP + diphosphate. The polypeptide is Leucine--tRNA ligase (Bacillus anthracis (strain A0248)).